The primary structure comprises 423 residues: Glutamate-1-semialdehyde 2,1-aminomutase (423 aa).

Position 262 is an N6-(pyridoxal phosphate)lysine (lysine 262).

This sequence belongs to the class-III pyridoxal-phosphate-dependent aminotransferase family. HemL subfamily. As to quaternary structure, homodimer. It depends on pyridoxal 5'-phosphate as a cofactor.

The protein resides in the cytoplasm. It catalyses the reaction (S)-4-amino-5-oxopentanoate = 5-aminolevulinate. Its pathway is porphyrin-containing compound metabolism; protoporphyrin-IX biosynthesis; 5-aminolevulinate from L-glutamyl-tRNA(Glu): step 2/2. The protein is Glutamate-1-semialdehyde 2,1-aminomutase of Saccharophagus degradans (strain 2-40 / ATCC 43961 / DSM 17024).